A 387-amino-acid chain; its full sequence is 3-ketoacyl-CoA thiolase FadA (387 aa).

The active-site Acyl-thioester intermediate is Cys91. Residues His343 and Cys373 each act as proton acceptor in the active site.

This sequence belongs to the thiolase-like superfamily. Thiolase family. In terms of assembly, heterotetramer of two alpha chains (FadB) and two beta chains (FadA).

The protein localises to the cytoplasm. It catalyses the reaction an acyl-CoA + acetyl-CoA = a 3-oxoacyl-CoA + CoA. It functions in the pathway lipid metabolism; fatty acid beta-oxidation. Functionally, catalyzes the final step of fatty acid oxidation in which acetyl-CoA is released and the CoA ester of a fatty acid two carbons shorter is formed. Involved in the aerobic and anaerobic degradation of long-chain fatty acids. This is 3-ketoacyl-CoA thiolase FadA (fadA) from Escherichia coli (strain K12).